The chain runs to 438 residues: GTPase Obg (438 aa).

In terms of domain architecture, Obg spans 1 to 159 (MAFRDVLNIE…RRVRLELRLI (159 aa)). The 173-residue stretch at 160–332 (ADVGLVGYPN…LRETLFQLLP (173 aa)) folds into the OBG-type G domain. ATP is bound by residues 166-173 (GYPNAGKS), 191-195 (FTTLS), 219-222 (DIPG), 285-288 (NKVE), and 313-315 (SAK). Residues serine 173 and threonine 193 each contribute to the Mg(2+) site. In terms of domain architecture, OCT spans 357–435 (IVFREDAPAK…IGTFRFEYFD (79 aa)).

This sequence belongs to the TRAFAC class OBG-HflX-like GTPase superfamily. OBG GTPase family. As to quaternary structure, monomer. It depends on Mg(2+) as a cofactor.

The protein localises to the cytoplasm. An essential GTPase which binds GTP, GDP and possibly (p)ppGpp with moderate affinity, with high nucleotide exchange rates and a fairly low GTP hydrolysis rate. Plays a role in control of the cell cycle, stress response, ribosome biogenesis and in those bacteria that undergo differentiation, in morphogenesis control. In Deinococcus radiodurans (strain ATCC 13939 / DSM 20539 / JCM 16871 / CCUG 27074 / LMG 4051 / NBRC 15346 / NCIMB 9279 / VKM B-1422 / R1), this protein is GTPase Obg.